The primary structure comprises 127 residues: Large ribosomal subunit protein bL12 (127 aa).

This sequence belongs to the bacterial ribosomal protein bL12 family. In terms of assembly, homodimer. Part of the ribosomal stalk of the 50S ribosomal subunit. Forms a multimeric L10(L12)X complex, where L10 forms an elongated spine to which 2 to 4 L12 dimers bind in a sequential fashion. Binds GTP-bound translation factors.

Functionally, forms part of the ribosomal stalk which helps the ribosome interact with GTP-bound translation factors. Is thus essential for accurate translation. In Rhizobium etli (strain CIAT 652), this protein is Large ribosomal subunit protein bL12.